Consider the following 304-residue polypeptide: Uricase (304 aa).

An N-acetylalanine modification is found at alanine 2. An N6-acetyllysine; alternate mark is found at lysine 10 and lysine 23. 2 positions are modified to N6-succinyllysine; alternate: lysine 10 and lysine 23. Lysine 23 serves as the catalytic Charge relay system. An N6-acetyllysine mark is found at lysine 27 and lysine 36. A phosphoserine mark is found at serine 39 and serine 63. The active-site Charge relay system is threonine 68. 2 residues coordinate urate: threonine 68 and aspartate 69. Residues lysine 118, lysine 122, and lysine 164 each carry the N6-acetyllysine modification. Position 170 (phenylalanine 170) interacts with urate. 2 positions are modified to N6-acetyllysine: lysine 175 and lysine 185. Arginine 187 is a binding site for urate. 2 positions are modified to N6-acetyllysine; alternate: lysine 221 and lysine 228. N6-succinyllysine; alternate is present on residues lysine 221 and lysine 228. At serine 232 the chain carries Phosphoserine. Urate-binding residues include valine 235, glutamine 236, and asparagine 262. Histidine 264 functions as the Charge relay system in the catalytic mechanism. Lysine 278 carries the N6-acetyllysine modification. Tyrosine 289 carries the post-translational modification Phosphotyrosine. Positions 302-304 (SRL) match the Microbody targeting signal motif.

Belongs to the uricase family.

It localises to the peroxisome. It carries out the reaction urate + O2 + H2O = 5-hydroxyisourate + H2O2. It functions in the pathway purine metabolism; urate degradation; (S)-allantoin from urate: step 1/3. Catalyzes the oxidation of uric acid to 5-hydroxyisourate, which is further processed to form (S)-allantoin. The chain is Uricase (UOX) from Macaca fascicularis (Crab-eating macaque).